We begin with the raw amino-acid sequence, 454 residues long: Transmembrane protease serine 3 (454 aa).

The Cytoplasmic portion of the chain corresponds to 1 to 48 (MGENDPPAVEAPFSFRSLFGLDDLKISPVAPDADAVAAQILSLLPLKF). The helical; Signal-anchor for type II membrane protein transmembrane segment at 49-69 (FPIIVIGIIALILALAIGLGI) threads the bilayer. The Extracellular portion of the chain corresponds to 70–454 (HFDCSGKYRC…HEQMERDLKT (385 aa)). The LDL-receptor class A domain occupies 72 to 108 (DCSGKYRCRSSFKCIELIARCDGVSDCKDGEDEYRCV). 10 disulfides stabilise this stretch: Cys-73–Cys-85, Cys-79–Cys-98, Cys-92–Cys-107, Cys-129–Cys-194, Cys-142–Cys-204, Cys-207–Cys-324, Cys-242–Cys-258, Cys-338–Cys-407, Cys-370–Cys-386, and Cys-397–Cys-425. Positions 109-205 (RVGGQNAVLQ…SGHVVTLQCT (97 aa)) constitute an SRCR domain. Residues 217–449 (IVGGNMSLLS…FLDWIHEQME (233 aa)) enclose the Peptidase S1 domain. Asn-221 carries N-linked (GlcNAc...) asparagine glycosylation. Catalysis depends on charge relay system residues His-257 and Asp-304. Catalysis depends on Ser-401, which acts as the Charge relay system.

The protein belongs to the peptidase S1 family. Undergoes autoproteolytic activation. As to expression, expressed in many tissues including fetal cochlea. Isoform T is found at increased levels in some carcinomas.

It localises to the endoplasmic reticulum membrane. Its function is as follows. Probable serine protease that plays a role in hearing. Acts as a permissive factor for cochlear hair cell survival and activation at the onset of hearing and is required for saccular hair cell survival. Activates ENaC (in vitro). The protein is Transmembrane protease serine 3 (TMPRSS3) of Homo sapiens (Human).